We begin with the raw amino-acid sequence, 918 residues long: DNA ligase 1 (918 aa).

Positions 1-15 are enriched in polar residues; that stretch reads MQRSIMSFFQPTTTE. Residues 1-271 form a disordered region; sequence MQRSIMSFFQ…DPTNYNPSKS (271 aa). Over residues 16-54 the composition is skewed to basic and acidic residues; that stretch reads GKAKKPEKEIPSSIREKEPPPKVALKERNRAVPESDSPV. Residues Ser-50, Ser-52, Ser-66, and Ser-67 each carry the phosphoserine modification. The residue at position 78 (Thr-78) is a Phosphothreonine. A compositionally biased stretch (low complexity) spans 81–92; it reads VQKPVSDSKQSS. Over residues 100 to 114 the composition is skewed to polar residues; sequence PENSPVFNCSPSMDI. Residues 120 to 130 show a composition bias toward basic residues; that stretch reads PKRRTARKQLP. Lys-145 carries the post-translational modification N6-acetyllysine. Thr-195 bears the Phosphothreonine mark. At Lys-227 the chain carries N6-acetyllysine. Phosphoserine is present on residues Ser-230 and Ser-231. At Thr-234 the chain carries Phosphothreonine. A compositionally biased stretch (basic and acidic residues) spans 240–259; it reads VKTEVKQEESDTPRKEETKG. Glu-566 contributes to the ATP binding site. Lys-568 (N6-AMP-lysine intermediate) is an active-site residue. Residues Arg-573 and Glu-621 each contribute to the ATP site. Glu-621 contacts Mg(2+). Residues 642–644 are interaction with target DNA; the sequence is KRK. Residue Glu-720 participates in Mg(2+) binding. The ATP site is built by Lys-725 and Lys-744. Phosphothreonine is present on Thr-798. Phosphoserine occurs at positions 801, 908, 909, and 913. The interval 881-918 is disordered; it reads DKQPEQATTSDQVASLYRKQSQIQNQQSSDLDSDVEDY. Residues 885–910 are compositionally biased toward polar residues; it reads EQATTSDQVASLYRKQSQIQNQQSSD.

This sequence belongs to the ATP-dependent DNA ligase family. Interacts with PCNA. Interacts with POLB. Requires Mg(2+) as cofactor.

It localises to the nucleus. The catalysed reaction is ATP + (deoxyribonucleotide)n-3'-hydroxyl + 5'-phospho-(deoxyribonucleotide)m = (deoxyribonucleotide)n+m + AMP + diphosphate.. DNA ligase that seals nicks in double-stranded during DNA repair. Also involved in DNA replication and DNA recombination. The sequence is that of DNA ligase 1 (Lig1) from Rattus norvegicus (Rat).